A 2555-amino-acid chain; its full sequence is Squalestatin hexaketide synthase clz14 (2555 aa).

Residues 1-84 (MDVSKEAGHH…PNATSTTTTT (84 aa)) are disordered. Over residues 10–84 (HANGFANGNT…PNATSTTTTT (75 aa)) the composition is skewed to low complexity. The 421-residue stretch at 91-511 (QVPVAICGIG…GSNTHIIIDS (421 aa)) folds into the Ketosynthase family 3 (KS3) domain. Active-site for beta-ketoacyl synthase activity residues include Cys261, His398, and His435. Positions 611–928 (FIFTGQGAQW…LEGIGKLFCF (318 aa)) are malonyl-CoA:ACP transacylase (MAT) domain. Residues 975-1104 (HELLGERSLE…GLVTASVVTS (130 aa)) form an N-terminal hotdog fold region. The tract at residues 975 to 1256 (HELLGERSLE…RGFKCKKTDD (282 aa)) is dehydratase (DH) domain. Residues 975–1260 (HELLGERSLE…CKKTDDAFIQ (286 aa)) enclose the PKS/mFAS DH domain. The Proton acceptor; for dehydratase activity role is filled by His1007. The segment at 1117 to 1260 (SRKVDTSRWY…CKKTDDAFIQ (144 aa)) is C-terminal hotdog fold. Asp1177 functions as the Proton donor; for dehydratase activity in the catalytic mechanism. The methyltransferase (CMet) domain stretch occupies residues 1424 to 1595 (SFFQAAGLNK…GFEGAGTVVL (172 aa)). The segment at 1821–2141 (GMLNTLHWVG…RGVHMGRIVV (321 aa)) is enoyl reductase (ER) (ER) domain. The tract at residues 2165–2338 (STYLLTGGMG…PASVIDIAAI (174 aa)) is ketoreductase (KR) domain. The 79-residue stretch at 2468-2546 (IIFAQEIAKR…SLGRLATKRL (79 aa)) folds into the Carrier domain. Position 2505 is an O-(pantetheine 4'-phosphoryl)serine (Ser2505).

It functions in the pathway secondary metabolite biosynthesis. Functionally, highly reducing polyketide synthase (HR-PKS); part of the gene cluster that mediates the biosynthesis of squalestatin S1 (SQS1, also known as zaragozic acid A), a heavily oxidized fungal polyketide that offers potent cholesterol lowering activity by targeting squalene synthase (SS). SQS1 is composed of a 2,8-dioxobicyclic[3.2.1]octane-3,4,5-tricarboxyclic acid core that is connected to two lipophilic polyketide arms. These initial steps feature the priming of an unusual benzoic acid starter unit onto the highly reducing polyketide synthase clz14, followed by oxaloacetate extension and product release to generate a tricarboxylic acid containing product. The phenylalanine ammonia lyase (PAL) clz10 and the acyl-CoA ligase clz12 are involved in transforming phenylalanine into benzoyl-CoA. The citrate synthase-like protein clz17 is involved in connecting the C-alpha-carbons of the hexaketide chain and oxaloacetate to afford the tricarboxylic acid unit. The potential hydrolytic enzymes, clz11 and clz13, are in close proximity to pks2 and may participate in product release. On the other side, the tetraketide arm is synthesized by a the squalestatin tetraketide synthase clz2 and enzymatically esterified to the core in the last biosynthetic step, by the acetyltransferase clz6. The biosynthesis of the tetraketide must involve 3 rounds of chain extension. After the first and second rounds methyl-transfer occurs, and in all rounds of extension the ketoreductase and dehydratase are active. The enoyl reductase and C-MeT of clz2 are not active in the final round of extension. The acetyltransferase clz6 appears to have a broad substrate selectivity for its acyl CoA substrate, allowing the in vitro synthesis of novel squalestatins. The biosynthesis of SQS1 requires several oxidative steps likely performed by oxidoreductases clz3, clz15 and clz16. Finally, in support of the identification of the cluster as being responsible for SQS1 production, the cluster contains a gene encoding a putative squalene synthase (SS) clz20, suggesting a likely mechanism for self-resistance. This is Squalestatin hexaketide synthase clz14 from Cochliobolus lunatus (Filamentous fungus).